A 704-amino-acid polypeptide reads, in one-letter code: Ion-translocating oxidoreductase complex subunit C (704 aa).

2 4Fe-4S ferredoxin-type domains span residues 368-397 (MGAP…QQLY) and 407-436 (KATA…VQYF). Residues C377, C380, C383, C387, C416, C419, C422, and C426 each contribute to the [4Fe-4S] cluster site. Residues 535-684 (ARAKQAAHPM…PADPRKAAVA (150 aa)) form a disordered region. Low complexity predominate over residues 556-565 (KAAVEAAIAR).

Belongs to the 4Fe4S bacterial-type ferredoxin family. RnfC subfamily. The complex is composed of six subunits: RsxA, RsxB, RsxC, RsxD, RsxE and RsxG. It depends on [4Fe-4S] cluster as a cofactor.

It is found in the cell inner membrane. In terms of biological role, part of a membrane-bound complex that couples electron transfer with translocation of ions across the membrane. Required to maintain the reduced state of SoxR. The chain is Ion-translocating oxidoreductase complex subunit C from Salmonella paratyphi C (strain RKS4594).